A 238-amino-acid chain; its full sequence is Cysteine-rich venom protein 2 (238 aa).

Residues 1 to 19 form the signal peptide; sequence MIAFIVLLSLAAVLQQSSG. Positions 38–164 constitute an SCP domain; it reads VDKHNALRRS…STKYLYVCQY (127 aa). 8 disulfides stabilise this stretch: C75–C153, C92–C165, C148–C162, C184–C191, C187–C196, C200–C233, C209–C227, and C218–C231. The ShKT domain maps to 200–233; it reads CEYEDAYTNCNDLVKERKCQTEWIKSQCPATCFC.

This sequence belongs to the CRISP family. In terms of tissue distribution, expressed by the venom gland.

The protein resides in the secreted. Blocks contraction of smooth muscle elicited by high potassium-induced depolarization, but does not block caffeine-stimulated contraction. May target voltage-gated calcium channels (Cav) on smooth muscle. This chain is Cysteine-rich venom protein 2, found in Hydrophis hardwickii (Hardwick's spine-bellied seasnake).